The following is a 380-amino-acid chain: Cytochrome b (380 aa).

4 helical membrane passes run 34–54 (FGSL…FLAM), 78–99 (WLLR…YCHI), 114–134 (WNVG…GYVL), and 179–199 (FFAF…IDLV). Residues H84 and H98 each contribute to the heme b site. H183 provides a ligand contact to heme b. Position 202 (H202) interacts with a ubiquinone. A run of 4 helical transmembrane segments spans residues 227–247 (TKDT…ALLF), 289–309 (LGGV…PLLN), 321–341 (LSQA…WIGS), and 348–369 (FVLI…GFPL).

The protein belongs to the cytochrome b family. In terms of assembly, the main subunits of complex b-c1 are: cytochrome b, cytochrome c1 and the Rieske protein. Heme b serves as cofactor.

The protein resides in the mitochondrion inner membrane. Its function is as follows. Component of the ubiquinol-cytochrome c reductase complex (complex III or cytochrome b-c1 complex) that is part of the mitochondrial respiratory chain. The b-c1 complex mediates electron transfer from ubiquinol to cytochrome c. Contributes to the generation of a proton gradient across the mitochondrial membrane that is then used for ATP synthesis. The sequence is that of Cytochrome b (MT-CYB) from Paracentrotus lividus (Common sea urchin).